The primary structure comprises 407 residues: Methylenetetrahydrofolate--tRNA-(uracil-5-)-methyltransferase TrmFO (407 aa).

9–14 (GAGLAG) lines the FAD pocket.

It belongs to the MnmG family. TrmFO subfamily. Requires FAD as cofactor.

The protein localises to the cytoplasm. It carries out the reaction uridine(54) in tRNA + (6R)-5,10-methylene-5,6,7,8-tetrahydrofolate + NADH + H(+) = 5-methyluridine(54) in tRNA + (6S)-5,6,7,8-tetrahydrofolate + NAD(+). The enzyme catalyses uridine(54) in tRNA + (6R)-5,10-methylene-5,6,7,8-tetrahydrofolate + NADPH + H(+) = 5-methyluridine(54) in tRNA + (6S)-5,6,7,8-tetrahydrofolate + NADP(+). Its function is as follows. Catalyzes the folate-dependent formation of 5-methyl-uridine at position 54 (M-5-U54) in all tRNAs. The protein is Methylenetetrahydrofolate--tRNA-(uracil-5-)-methyltransferase TrmFO of Lactobacillus helveticus (strain DPC 4571).